A 200-amino-acid chain; its full sequence is MSERIEKIMTVGITGASGGMYGVRLTQELLRQEYKVHLVLTEAAWQVFKEELLLDTTDRQKVIHELFGDLPGELHTHDLHDYAAPIASGSYRSAGMVIIPCSMGTLSGMAHGASGNLLERTADVMLKEKRKLVIVPRETPLHDIHLENMLKLSKMGATILPAMPGYYHLPKTIDDLINFLVGKALDSLGVEHTLFTRWGE.

FMN contacts are provided by residues glycine 15–serine 17, threonine 41, serine 102–threonine 105, and arginine 137. Dimethylallyl phosphate is bound by residues tyrosine 167 and lysine 183.

The protein belongs to the UbiX/PAD1 family.

It catalyses the reaction dimethylallyl phosphate + FMNH2 = prenylated FMNH2 + phosphate. In terms of biological role, flavin prenyltransferase that catalyzes the synthesis of the prenylated FMN cofactor (prenyl-FMN) for 4-hydroxy-3-polyprenylbenzoic acid decarboxylase UbiD. The prenyltransferase is metal-independent and links a dimethylallyl moiety from dimethylallyl monophosphate (DMAP) to the flavin N5 and C6 atoms of FMN. This Alkalihalophilus pseudofirmus (strain ATCC BAA-2126 / JCM 17055 / OF4) (Bacillus pseudofirmus) protein is Flavin prenyltransferase UbiX.